Reading from the N-terminus, the 359-residue chain is uncharacterized protein (359 aa).

Positions 73-88 (AATAGTTPATGASGSA) are enriched in low complexity. The segment at 73–93 (AATAGTTPATGASGSARPTDA) is disordered. The Macro domain maps to 179–354 (PSTCRGDNVS…AFSAAIQAGE (176 aa)).

This is an uncharacterized protein from Mycobacterium tuberculosis (strain ATCC 25618 / H37Rv).